Reading from the N-terminus, the 254-residue chain is Aspartate/glutamate leucyltransferase (254 aa).

Belongs to the R-transferase family. Bpt subfamily.

The protein localises to the cytoplasm. It catalyses the reaction N-terminal L-glutamyl-[protein] + L-leucyl-tRNA(Leu) = N-terminal L-leucyl-L-glutamyl-[protein] + tRNA(Leu) + H(+). The enzyme catalyses N-terminal L-aspartyl-[protein] + L-leucyl-tRNA(Leu) = N-terminal L-leucyl-L-aspartyl-[protein] + tRNA(Leu) + H(+). Its function is as follows. Functions in the N-end rule pathway of protein degradation where it conjugates Leu from its aminoacyl-tRNA to the N-termini of proteins containing an N-terminal aspartate or glutamate. The sequence is that of Aspartate/glutamate leucyltransferase from Xylella fastidiosa (strain M12).